Here is a 122-residue protein sequence, read N- to C-terminus: MKRQRARRLGELLKKEISDIILREVKDPRIGFISVTDVEVSNDLRHAKVFVSVYGDEKERKETMEGLEKATGYIRKLIGERVKVYYTPEILFRYDDSLEHGARINELLKKVKEEEESDREEG.

This sequence belongs to the RbfA family. In terms of assembly, monomer. Binds 30S ribosomal subunits, but not 50S ribosomal subunits or 70S ribosomes.

The protein localises to the cytoplasm. Its function is as follows. One of several proteins that assist in the late maturation steps of the functional core of the 30S ribosomal subunit. Associates with free 30S ribosomal subunits (but not with 30S subunits that are part of 70S ribosomes or polysomes). Required for efficient processing of 16S rRNA. May interact with the 5'-terminal helix region of 16S rRNA. This chain is Ribosome-binding factor A, found in Halothermothrix orenii (strain H 168 / OCM 544 / DSM 9562).